The primary structure comprises 300 residues: Uricase (300 aa).

A2 is modified (N-acetylalanine). K6 and K19 each carry N6-acetyllysine; alternate. N6-succinyllysine; alternate occurs at positions 6 and 19. The active-site Charge relay system is the K19. Residues K23 and K32 each carry the N6-acetyllysine modification. A phosphoserine mark is found at S35 and S59. T64 (charge relay system) is an active-site residue. Urate-binding residues include T64 and D65. Residues K114, K118, and K160 each carry the N6-acetyllysine modification. F166 contributes to the urate binding site. K171 and K181 each carry N6-acetyllysine. R183 provides a ligand contact to urate. 2 positions are modified to N6-acetyllysine; alternate: K217 and K224. N6-succinyllysine; alternate occurs at positions 217 and 224. S228 bears the Phosphoserine mark. Urate-binding residues include V231, Q232, and N258. Residue H260 is the Charge relay system of the active site. K274 carries the post-translational modification N6-acetyllysine. A Phosphotyrosine modification is found at Y285. A Microbody targeting signal motif is present at residues S298 to L300.

Belongs to the uricase family.

It localises to the peroxisome. The enzyme catalyses urate + O2 + H2O = 5-hydroxyisourate + H2O2. It functions in the pathway purine metabolism; urate degradation; (S)-allantoin from urate: step 1/3. Its function is as follows. Catalyzes the oxidation of uric acid to 5-hydroxyisourate, which is further processed to form (S)-allantoin. The protein is Uricase (UOX) of Oryctolagus cuniculus (Rabbit).